The chain runs to 393 residues: RNA pseudouridine synthase 7 (393 aa).

The 70-residue stretch at 49–118 folds into the S4 RNA-binding domain; sequence KTIVDLFTDE…GDITILQNEA (70 aa). Aspartate 162 is an active-site residue.

Belongs to the pseudouridine synthase RluA family.

It catalyses the reaction a uridine in RNA = a pseudouridine in RNA. The polypeptide is RNA pseudouridine synthase 7 (Oryza sativa subsp. japonica (Rice)).